A 137-amino-acid polypeptide reads, in one-letter code: Histone H2B.4 (137 aa).

Positions 1 to 37 (MAPKAEKKPAEKKPTEEKAEKKPRAEKRVPGKEGGEK) are enriched in basic and acidic residues. A disordered region spans residues 1–45 (MAPKAEKKPAEKKPTEEKAEKKPRAEKRVPGKEGGEKKGKKKAKK). 2 positions are modified to N6-acetyllysine: Lys7 and Lys27. A Glycyl lysine isopeptide (Lys-Gly) (interchain with G-Cter in ubiquitin) cross-link involves residue Lys133.

Belongs to the histone H2B family. The nucleosome is a histone octamer containing two molecules each of H2A, H2B, H3 and H4 assembled in one H3-H4 heterotetramer and two H2A-H2B heterodimers. The octamer wraps approximately 147 bp of DNA. Post-translationally, can be acetylated to form H2BK6ac and H2BK33ac. In terms of processing, monoubiquitinated to form H2BK143ub1; may give a specific tag for epigenetic transcriptional activation.

It localises to the nucleus. The protein localises to the chromosome. Core component of nucleosome. Nucleosomes wrap and compact DNA into chromatin, limiting DNA accessibility to the cellular machineries which require DNA as a template. Histones thereby play a central role in transcription regulation, DNA repair, DNA replication and chromosomal stability. DNA accessibility is regulated via a complex set of post-translational modifications of histones, also called histone code, and nucleosome remodeling. In Zea mays (Maize), this protein is Histone H2B.4.